Consider the following 574-residue polypeptide: Septation ring formation regulator EzrA (574 aa).

The Extracellular segment spans residues 1–7 (MSSGIIL). Residues 8 to 26 (LIVAIVLLVIIAYLIGVII) form a helical membrane-spanning segment. The Cytoplasmic portion of the chain corresponds to 27 to 574 (RKRNDSMIGT…YERTREHIRF (548 aa)). Coiled-coil stretches lie at residues 102–140 (NFIRAKHEINNVESQLNLVEEDITSIREALSILKEQEEK), 243–379 (RRLL…GQEI), and 459–520 (QLEA…SFEA).

It belongs to the EzrA family.

The protein localises to the cell membrane. In terms of biological role, negative regulator of FtsZ ring formation; modulates the frequency and position of FtsZ ring formation. Inhibits FtsZ ring formation at polar sites. Interacts either with FtsZ or with one of its binding partners to promote depolymerization. This is Septation ring formation regulator EzrA from Streptococcus uberis (strain ATCC BAA-854 / 0140J).